We begin with the raw amino-acid sequence, 207 residues long: Thiamine-phosphate synthase (207 aa).

Residues 35-39 (QYRDK) and N67 contribute to the 4-amino-2-methyl-5-(diphosphooxymethyl)pyrimidine site. 2 residues coordinate Mg(2+): D68 and D86. T105 lines the 4-amino-2-methyl-5-(diphosphooxymethyl)pyrimidine pocket. Residue 132-134 (SNT) coordinates 2-[(2R,5Z)-2-carboxy-4-methylthiazol-5(2H)-ylidene]ethyl phosphate. K135 provides a ligand contact to 4-amino-2-methyl-5-(diphosphooxymethyl)pyrimidine. G162 provides a ligand contact to 2-[(2R,5Z)-2-carboxy-4-methylthiazol-5(2H)-ylidene]ethyl phosphate.

The protein belongs to the thiamine-phosphate synthase family. Requires Mg(2+) as cofactor.

The enzyme catalyses 2-[(2R,5Z)-2-carboxy-4-methylthiazol-5(2H)-ylidene]ethyl phosphate + 4-amino-2-methyl-5-(diphosphooxymethyl)pyrimidine + 2 H(+) = thiamine phosphate + CO2 + diphosphate. The catalysed reaction is 2-(2-carboxy-4-methylthiazol-5-yl)ethyl phosphate + 4-amino-2-methyl-5-(diphosphooxymethyl)pyrimidine + 2 H(+) = thiamine phosphate + CO2 + diphosphate. It carries out the reaction 4-methyl-5-(2-phosphooxyethyl)-thiazole + 4-amino-2-methyl-5-(diphosphooxymethyl)pyrimidine + H(+) = thiamine phosphate + diphosphate. Its pathway is cofactor biosynthesis; thiamine diphosphate biosynthesis; thiamine phosphate from 4-amino-2-methyl-5-diphosphomethylpyrimidine and 4-methyl-5-(2-phosphoethyl)-thiazole: step 1/1. In terms of biological role, condenses 4-methyl-5-(beta-hydroxyethyl)thiazole monophosphate (THZ-P) and 2-methyl-4-amino-5-hydroxymethyl pyrimidine pyrophosphate (HMP-PP) to form thiamine monophosphate (TMP). This chain is Thiamine-phosphate synthase, found in Pseudomonas fluorescens (strain Pf0-1).